The chain runs to 190 residues: Elongation factor P (190 aa).

It belongs to the elongation factor P family.

It is found in the cytoplasm. It participates in protein biosynthesis; polypeptide chain elongation. Its function is as follows. Involved in peptide bond synthesis. Stimulates efficient translation and peptide-bond synthesis on native or reconstituted 70S ribosomes in vitro. Probably functions indirectly by altering the affinity of the ribosome for aminoacyl-tRNA, thus increasing their reactivity as acceptors for peptidyl transferase. This Bartonella bacilliformis (strain ATCC 35685 / KC583 / Herrer 020/F12,63) protein is Elongation factor P.